Consider the following 864-residue polypeptide: Calphotin (864 aa).

The leucine-zipper stretch occupies residues 816-858 (LQTTDVSLLAIAATLDAIGEKLKDQKARNQQVMDRLCEIEKIL).

Homodimer. Soma and axons of photoreceptor cells of compound eyes and ocelli.

It is found in the cytoplasm. In terms of biological role, plays important roles in both rhabdomere development and in photoreceptor cell survival. Might function as a calcium-sequestering 'sponge' to regulate the amount of free cytoplasmic calcium. It binds 0.3 mole of Ca(2+) per mole of protein. This Drosophila melanogaster (Fruit fly) protein is Calphotin (Cpn).